The primary structure comprises 324 residues: Envelope protein H3 (324 aa).

Residues 1–284 lie on the Virion surface side of the membrane; the sequence is MAAVKTPVIV…FTTPLISFFG (284 aa). The helical; Signal-anchor transmembrane segment at 285 to 305 threads the bilayer; the sequence is LFDINVIGLIVILFIMFMLIF. Residues 306 to 324 are Intravirion-facing; it reads NVKSKLLWFLTGTFVTAFI.

The protein belongs to the orthopoxvirus OPG108 family. Post-translationally, does not contain disulfide bonds.

It localises to the virion membrane. Envelope protein that binds to heparan sulfate on the cell surface and might provide virion attachment to target cell. This Homo sapiens (Human) protein is Envelope protein H3 (OPG108).